Reading from the N-terminus, the 98-residue chain is MSMVYFNILMAFIVSFVGLLMYRSHLMSSLLCLEGMMLSLFVMMSVTILNNHFTLASMAPIILLVFAACEAALGLSLLVMVSNTYGTDYVQNLNLLQC.

3 helical membrane-spanning segments follow: residues 1–21, 29–49, and 61–81; these read MSMVYFNILMAFIVSFVGLLM, SLLCLEGMMLSLFVMMSVTIL, and IILLVFAACEAALGLSLLVMV.

It belongs to the complex I subunit 4L family. In terms of assembly, core subunit of respiratory chain NADH dehydrogenase (Complex I) which is composed of 45 different subunits.

The protein localises to the mitochondrion inner membrane. It carries out the reaction a ubiquinone + NADH + 5 H(+)(in) = a ubiquinol + NAD(+) + 4 H(+)(out). Its function is as follows. Core subunit of the mitochondrial membrane respiratory chain NADH dehydrogenase (Complex I) which catalyzes electron transfer from NADH through the respiratory chain, using ubiquinone as an electron acceptor. Part of the enzyme membrane arm which is embedded in the lipid bilayer and involved in proton translocation. The chain is NADH-ubiquinone oxidoreductase chain 4L (MT-ND4L) from Eumetopias jubatus (Steller sea lion).